Here is a 641-residue protein sequence, read N- to C-terminus: Chaperone protein DnaK (641 aa).

Phosphothreonine; by autocatalysis is present on threonine 199. Positions 577 to 590 (KGDNKDEIETRTQK) are enriched in basic and acidic residues. Residues 577–641 (KGDNKDEIET…EFEEVDDKKK (65 aa)) form a disordered region. Residues 617 to 626 (GAEQASAQQD) are compositionally biased toward low complexity. The segment covering 627 to 641 (DVVDAEFEEVDDKKK) has biased composition (acidic residues).

This sequence belongs to the heat shock protein 70 family.

Functionally, acts as a chaperone. The protein is Chaperone protein DnaK of Thioalkalivibrio sulfidiphilus (strain HL-EbGR7).